Reading from the N-terminus, the 963-residue chain is MDDDQQFCLRWNNHQSTLISVFDTLLENETLVDCTLAAEGKFLKAHKVVLSACSPYFATLLQEQYDKHPIFILKDVKYQELRAMMDYMYRGEVNISQDQLAALLKAAESLQIKGLSDNRTGGGVAPKPESSGHHRGGKLSGAYTLEQTKRARLATGGAMDTSGDVSGSREGSSSPSRRRRKVRRRSMENDAHDNSNSSVLQAAASNQSILQQTGAGLAVSALVTTQLSSGPAAGTSSQASSTQQQQPLTSTNVTKKTESAKLTSSTAAPASGASASAAVQQAHLHQQQAQTTSDAINTENVQAQSQGGAQGVQGDDEDIDEGSAVGGPNSATGPNPASASASAVHAGVVVKQLASVVDKSSSNHKHKIKDNSVSSVGSEMVIEPKAEYDDDAHDENVEDLTLDEEDMTMEELDQTAGTSQGGEGSSQTYATWQHDRSQDELGLMAQDAQQRDPQDEAGQNEGGESRIRVRNWLMLADKSIIGKSSDEPSDKLTQSKKSLISDAKTTNKTSTPIRPKVSTTTTSTSTAAAAAAAATIAAKQAAAAIASSNINNNNSSLTQTVTQTVTRIGSIGRTTIACITPANNGNKSSSSNCNVDAASAAALAAAGVELDSIDDTMTEVIVKIENPESMPLNDDEDDAVCNEAIEDENTFDYDLKLGSPLSWTYDAVKIENEEFEDSYLMDNDDDDDDLLTTAAATQKHAKQSNEKQMAGSMVAGAGSGGAVKKIVLSAQQQQQLLEQQQHLQHLQLQPTSQSLQIKLPAIPATITTISAPKQMMSGAGTSGSLTPNNNCTLMSNKLGLPVKGQNLDLHWSHSDDNRYRVLVQNKRTRKESLEHSADMIYNADIEKPWVCRNCNRTYKWKNSLKCHLKNECGLPPRYFCSKMCGYATNVHSNLKRHLNTKCRDREKDADDEKKPGSASGNMPVVVGVGNGTAVPVSSSNNNNNGGGSSTSSTYTLVFQNDSA.

The 66-residue stretch at 32-97 (VDCTLAAEGK…MYRGEVNISQ (66 aa)) folds into the BTB domain. 4 disordered regions span residues 115-200 (LSDN…SSVL), 228-340 (SSGP…ASAS), 447-469 (DAQQ…RIRV), and 482-520 (GKSS…VSTT). Composition is skewed to low complexity over residues 162–175 (SGDV…SSSP), 228–251 (SSGP…LTST), 263–293 (TSST…QTTS), and 329–340 (NSATGPNPASAS). The segment covering 491–512 (KLTQSKKSLISDAKTTNKTSTP) has biased composition (polar residues). The C2H2-type 1; degenerate zinc finger occupies 849-871 (WVCRNCNRTYKWKNSLKCHLKNE). The C2H2-type 2; degenerate zinc finger occupies 878-901 (YFCSKMCGYATNVHSNLKRHLNTK). The disordered stretch occupies residues 900–963 (TKCRDREKDA…YTLVFQNDSA (64 aa)). Basic and acidic residues predominate over residues 901 to 915 (KCRDREKDADDEKKP). A compositionally biased stretch (low complexity) spans 937-953 (SSSNNNNNGGGSSTSST). Residues 954–963 (YTLVFQNDSA) show a composition bias toward polar residues.

In terms of tissue distribution, by stage 11, isoform Q, isoform P and isoform Z are expressed throughout the mesoderm. From stage 15, expression of isoform P expands to all tissues, whereas expression of isoform Z and isoform Q becomes restricted during later stages; starting from stage 14 to 16, isoform Z is expressed in muscle, and isoform Q and isoform Z are expressed in the CNS. For some isoforms, expression is also seen in specific types of cells in the embryo; isoform Z is expressed in the ventral furrow at stage 5, and isoform Q is expressed around the tracheal pits at stage 11. Isoform Z also shows transient enrichment in a dorsal cell layer in the CNS at stages 13 and 14.

It localises to the nucleus. Its function is as follows. Putative transcription factor required for axon growth and guidance in the central and peripheral nervous systems. Repels CNS axons away from the midline by promoting the expression of the midline repellent sli and its receptor robo. The protein is Longitudinals lacking protein, isoforms J/P/Q/S/Z of Drosophila melanogaster (Fruit fly).